The chain runs to 138 residues: Vesicle transport protein GOT1B (138 aa).

Methionine 1 carries the N-acetylmethionine modification. At 1 to 9 (MISLTDTQK) the chain is on the cytoplasmic side. A helical membrane pass occupies residues 10 to 30 (IGMGLTGFGVFFLFFGMILFF). Over 31-32 (DK) the chain is Lumenal. Residues 33–53 (ALLAIGNVLFVAGLAFVIGLE) traverse the membrane as a helical segment. The Cytoplasmic segment spans residues 54–68 (RTFRFFFQRHKVKAT). Position 90 (glutamate 90) is a topological domain, lumenal. The helical transmembrane segment at 91–109 (IYGFFLLFRGFFPVVVGFI) threads the bilayer. The Cytoplasmic segment spans residues 110-138 (RRVPVLGSLLNLPGIRSFVDKVGESNNMV).

Belongs to the GOT1 family.

It is found in the golgi apparatus membrane. Functionally, may be involved in fusion of ER-derived transport vesicles with the Golgi complex. The chain is Vesicle transport protein GOT1B (Golt1b) from Mus musculus (Mouse).